The primary structure comprises 177 residues: Large ribosomal subunit protein uL6 (177 aa).

Belongs to the universal ribosomal protein uL6 family. As to quaternary structure, part of the 50S ribosomal subunit.

In terms of biological role, this protein binds to the 23S rRNA, and is important in its secondary structure. It is located near the subunit interface in the base of the L7/L12 stalk, and near the tRNA binding site of the peptidyltransferase center. The sequence is that of Large ribosomal subunit protein uL6 from Novosphingobium aromaticivorans (strain ATCC 700278 / DSM 12444 / CCUG 56034 / CIP 105152 / NBRC 16084 / F199).